The following is a 271-amino-acid chain: Phosphatidylinositol transfer protein beta isoform (271 aa).

The residue at position 215 (K215) is an N6-acetyllysine. Phosphoserine; by PKC is present on S262.

This sequence belongs to the PtdIns transfer protein family. PI transfer class I subfamily. Post-translationally, constitutive phosphorylation of Ser-262 has no effect on phospholipid transfer activity but is required for Golgi targeting.

It is found in the golgi apparatus. It localises to the golgi apparatus membrane. The protein resides in the endoplasmic reticulum membrane. It carries out the reaction a 1,2-diacyl-sn-glycero-3-phosphocholine(in) = a 1,2-diacyl-sn-glycero-3-phosphocholine(out). It catalyses the reaction a 1,2-diacyl-sn-glycero-3-phospho-(1D-myo-inositol)(in) = a 1,2-diacyl-sn-glycero-3-phospho-(1D-myo-inositol)(out). The catalysed reaction is an N-(acyl)-sphingosylphosphocholine(in) = an N-(acyl)-sphingosylphosphocholine(out). Functionally, catalyzes the transfer of phosphatidylinositol, phosphatidylcholine and sphingomyelin between membranes. Required for COPI-mediated retrograde transport from the Golgi to the endoplasmic reticulum; phosphatidylinositol and phosphatidylcholine transfer activity is essential for this function. This is Phosphatidylinositol transfer protein beta isoform (Pitpnb) from Mus musculus (Mouse).